We begin with the raw amino-acid sequence, 240 residues long: Agamous-like MADS-box protein AGL16 (240 aa).

The 61-residue stretch at 1–61 folds into the MADS-box domain; it reads MGRGKIAIKR…GRLYDFSSSS (61 aa). Positions 86–176 constitute a K-box domain; the sequence is IQFWQKEAAI…HKKVNLMHQQ (91 aa).

In terms of assembly, homodimer. Interacts with AGL15, AGL24, AP1, AGL6, AG, AGL1, AGL11, AGL5, SEP3, SEP1, AGL63, AGL14, SOC1 and AGL21. Interacts with AGL63. Interacts with SVP. Expressed at high levels in leaves, moderate levels in roots, seedlings and stems, and at low levels in flowers, pollen and siliques. Accumulates in leaf guard cells and trichomes. Also present in epidermal cells of roots. Expressed in mature guard cells.

Its subcellular location is the nucleus. In terms of biological role, probable transcription factor involved in the regulation of flowering time in long-day photoperiod. Participates in the repression of FT expression and floral transition, by interacting closely with the FLC-SVP pathways. Functions in the satellite meristemoid lineage of stomatal development. This chain is Agamous-like MADS-box protein AGL16 (AGL16), found in Arabidopsis thaliana (Mouse-ear cress).